A 360-amino-acid chain; its full sequence is UPF0496 protein At3g19250 (360 aa).

A disordered region spans residues 1–29 (MPHCFTFKPASPEGSLGDDHLPHPSPEGS). A run of 2 helical transmembrane segments spans residues 205 to 225 (HHAT…VAAS) and 229 to 249 (IAYH…TPYL).

It belongs to the UPF0496 family.

The protein resides in the membrane. This Arabidopsis thaliana (Mouse-ear cress) protein is UPF0496 protein At3g19250.